An 85-amino-acid chain; its full sequence is Probable Thioredoxin (85 aa).

The 84-residue stretch at 2-85 (VVKIEVFTSP…LFEAISDEIE (84 aa)) folds into the Glutaredoxin domain. Cysteine 13 and cysteine 16 form a disulfide bridge.

Belongs to the glutaredoxin family.

Its subcellular location is the cytoplasm. Does not function as a glutathione-disulfide oxidoreductase in the presence of glutathione and glutathione reductase. May be a component of a ribonucleotide-reducing system distinct from the previously described systems utilizing thioredoxin or glutaredoxin. In Methanothermobacter marburgensis (strain ATCC BAA-927 / DSM 2133 / JCM 14651 / NBRC 100331 / OCM 82 / Marburg) (Methanobacterium thermoautotrophicum), this protein is Probable Thioredoxin.